The chain runs to 1311 residues: AF4/FMR2 family member 2 (1311 aa).

Disordered stretches follow at residues 94-187 (LVGI…LTQD), 204-229 (PQIG…GEDA), and 377-417 (TAGH…TKSV). Positions 101 to 111 (SVPQNPNNKNE) are enriched in polar residues. The segment covering 155-164 (SKPEWSRDSH) has biased composition (basic and acidic residues). The span at 165 to 187 (NPSTVLASQASGQPNKMQTLTQD) shows a compositional bias: polar residues. Composition is skewed to polar residues over residues 377 to 396 (TAGH…SQHL) and 403 to 417 (QKWN…TKSV). A Phosphoserine modification is found at serine 430. 4 disordered regions span residues 457–530 (KAKP…KWQL), 574–726 (TNAS…DQEE), 818–867 (SLHA…IPEK), and 881–943 (PPCI…DKNI). Positions 465–477 (VNPPLATPQPPPA) are enriched in pro residues. The segment covering 478-491 (VQASGGSGSSSESE) has biased composition (low complexity). Position 517 is a phosphothreonine (threonine 517). Basic and acidic residues predominate over residues 582–597 (EPKERPLLSLIREKAR). Over residues 615 to 625 (STTSETVSQRT) the composition is skewed to polar residues. The span at 655–668 (PKEKESVELHDPPR) shows a compositional bias: basic and acidic residues. The segment covering 669-679 (GRNKATAHKPA) has biased composition (basic residues). Residues 857–867 (PIEVAEKIPEK) show a composition bias toward basic and acidic residues. Pro residues-rich tracts occupy residues 883-892 (CISPAPPHKP) and 913-922 (FPPPLSPLPE).

The protein belongs to the AF4 family. In terms of tissue distribution, brain (most abundant in hippocampus and amygdala), placenta and lung.

The protein localises to the nucleus speckle. RNA-binding protein. Might be involved in alternative splicing regulation through an interaction with G-quartet RNA structure. The polypeptide is AF4/FMR2 family member 2 (Homo sapiens (Human)).